We begin with the raw amino-acid sequence, 224 residues long: Prophage repressor CohE (224 aa).

In Escherichia coli (strain K12), this protein is Prophage repressor CohE (cohE).